Reading from the N-terminus, the 263-residue chain is (2Z,6E)-farnesyl diphosphate synthase (263 aa).

Residue D40 is part of the active site. A Mg(2+)-binding site is contributed by D40. Residues 41-44 (GNRR), W45, and 86-88 (STE) contribute to the substrate site. The Proton acceptor role is filled by N89. Substrate-binding positions include R92, R212, and 218–220 (RLS). Position 231 (E231) interacts with Mg(2+).

Belongs to the UPP synthase family. Z-FPP synthase subfamily. In terms of assembly, homodimer. The cofactor is Mg(2+).

It is found in the cell membrane. It carries out the reaction isopentenyl diphosphate + (2E)-geranyl diphosphate = (2Z,6E)-farnesyl diphosphate + diphosphate. In terms of biological role, catalyzes the condensation of only one isopentenyl pyrophosphate (IPP) unit in the cis configuration to E-geranyl diphosphate (E-GPP) generating the 15 carbon product (2Z,6E)-farnesyl diphosphate (Z-FPP or EZ-FPP). Z-FPP is the precursor of decaprenyl diphosphate, which has a central role in the biosynthesis of the mycobacterial cell wall. The protein is (2Z,6E)-farnesyl diphosphate synthase (uppS) of Mycolicibacterium smegmatis (strain ATCC 700084 / mc(2)155) (Mycobacterium smegmatis).